The chain runs to 360 residues: Membrane-bound lytic murein transglycosylase C (360 aa).

The signal sequence occupies residues 1–16 (MKKFFALALVAPLLIS). Cys-17 is lipidated: N-palmitoyl cysteine. Residue Cys-17 is the site of S-diacylglycerol cysteine attachment.

Belongs to the transglycosylase Slt family.

The protein resides in the cell outer membrane. It carries out the reaction Exolytic cleavage of the (1-&gt;4)-beta-glycosidic linkage between N-acetylmuramic acid (MurNAc) and N-acetylglucosamine (GlcNAc) residues in peptidoglycan, from either the reducing or the non-reducing ends of the peptidoglycan chains, with concomitant formation of a 1,6-anhydrobond in the MurNAc residue.. Murein-degrading enzyme. May play a role in recycling of muropeptides during cell elongation and/or cell division. This chain is Membrane-bound lytic murein transglycosylase C, found in Citrobacter koseri (strain ATCC BAA-895 / CDC 4225-83 / SGSC4696).